Reading from the N-terminus, the 361-residue chain is Pyruvate dehydrogenase E1 component subunit beta, mitochondrial (361 aa).

The transit peptide at 1–27 (MAVNGCMRLLRNGLTSACALEQSVRRL) directs the protein to the mitochondrion. A thiamine diphosphate-binding site is contributed by E90. The K(+) site is built by I143, A191, V192, D194, and N196.

As to quaternary structure, heterotetramer of two PDHA1 and two PDHB subunits. The heterotetramer interacts with DLAT, and is part of the multimeric pyruvate dehydrogenase complex that contains multiple copies of pyruvate dehydrogenase (E1), dihydrolipoamide acetyltransferase (DLAT, E2) and lipoamide dehydrogenase (DLD, E3). The cofactor is thiamine diphosphate.

The protein localises to the mitochondrion matrix. The enzyme catalyses N(6)-[(R)-lipoyl]-L-lysyl-[protein] + pyruvate + H(+) = N(6)-[(R)-S(8)-acetyldihydrolipoyl]-L-lysyl-[protein] + CO2. In terms of biological role, the pyruvate dehydrogenase complex catalyzes the overall conversion of pyruvate to acetyl-CoA and CO(2), and thereby links the glycolytic pathway to the tricarboxylic cycle. This is Pyruvate dehydrogenase E1 component subunit beta, mitochondrial from Ascaris suum (Pig roundworm).